We begin with the raw amino-acid sequence, 219 residues long: Endonuclease III (219 aa).

The 20-residue stretch at 109 to 128 folds into the HhH domain; sequence RDELVKLPGVGRKTANVVVS. Positions 189, 196, 199, and 205 each coordinate [4Fe-4S] cluster.

This sequence belongs to the Nth/MutY family. [4Fe-4S] cluster is required as a cofactor.

The catalysed reaction is 2'-deoxyribonucleotide-(2'-deoxyribose 5'-phosphate)-2'-deoxyribonucleotide-DNA = a 3'-end 2'-deoxyribonucleotide-(2,3-dehydro-2,3-deoxyribose 5'-phosphate)-DNA + a 5'-end 5'-phospho-2'-deoxyribonucleoside-DNA + H(+). Functionally, DNA repair enzyme that has both DNA N-glycosylase activity and AP-lyase activity. The DNA N-glycosylase activity releases various damaged pyrimidines from DNA by cleaving the N-glycosidic bond, leaving an AP (apurinic/apyrimidinic) site. The AP-lyase activity cleaves the phosphodiester bond 3' to the AP site by a beta-elimination, leaving a 3'-terminal unsaturated sugar and a product with a terminal 5'-phosphate. The polypeptide is Endonuclease III (Bacillus subtilis (strain 168)).